The sequence spans 397 residues: Tryptophan synthase beta chain (397 aa).

Position 87 is an N6-(pyridoxal phosphate)lysine (K87).

This sequence belongs to the TrpB family. Tetramer of two alpha and two beta chains. Pyridoxal 5'-phosphate is required as a cofactor.

It carries out the reaction (1S,2R)-1-C-(indol-3-yl)glycerol 3-phosphate + L-serine = D-glyceraldehyde 3-phosphate + L-tryptophan + H2O. The protein operates within amino-acid biosynthesis; L-tryptophan biosynthesis; L-tryptophan from chorismate: step 5/5. In terms of biological role, the beta subunit is responsible for the synthesis of L-tryptophan from indole and L-serine. The polypeptide is Tryptophan synthase beta chain (Escherichia coli O157:H7).